A 360-amino-acid polypeptide reads, in one-letter code: MKSILVGAAVALVVSILFTPYLIRVFSRQGFGQEIREEVQQSHAAKRGTPTMGGVAILVAMWAGYLVAHLTVTDEPPTASGLLVLGLTTALGIVGFLDDFIKIRKQRNLGLNKTAKLVGQLVASVLFAVLAMQFANQNGITPASEHLSFIRDITVISFGSVGFVIFAYIAISGWSNAVNFTDGMDGLAGGTAAMVLAIYVVISFWQFRNNCSAPNGPALACYTVRDPLDIALVAGAAMAACVGFLWWNAAPAKIFMGDTGSLALGGLLAGLSMVTRTELLMIIIGGLFVVEALSVVMQIVVFRSTRRRLFRMAPFHHHFELAGWAETTVIIRFWVLAAISAMFGLGLFYADWLSLAREFF.

10 helical membrane passes run 3 to 23 (SILV…PYLI), 52 to 72 (MGGV…HLTV), 81 to 101 (GLLV…DDFI), 115 to 135 (AKLV…MQFA), 153 to 173 (ITVI…AISG), 187 to 207 (LAGG…FWQF), 230 to 250 (IALV…WNAA), 254 to 274 (IFMG…LSMV), 282 to 302 (IIIG…IVVF), and 333 to 353 (FWVL…ADWL).

The protein belongs to the glycosyltransferase 4 family. MraY subfamily. Mg(2+) is required as a cofactor.

The protein localises to the cell membrane. The catalysed reaction is UDP-N-acetyl-alpha-D-muramoyl-L-alanyl-gamma-D-glutamyl-meso-2,6-diaminopimeloyl-D-alanyl-D-alanine + di-trans,octa-cis-undecaprenyl phosphate = di-trans,octa-cis-undecaprenyl diphospho-N-acetyl-alpha-D-muramoyl-L-alanyl-D-glutamyl-meso-2,6-diaminopimeloyl-D-alanyl-D-alanine + UMP. Its pathway is cell wall biogenesis; peptidoglycan biosynthesis. Functionally, catalyzes the initial step of the lipid cycle reactions in the biosynthesis of the cell wall peptidoglycan: transfers peptidoglycan precursor phospho-MurNAc-pentapeptide from UDP-MurNAc-pentapeptide onto the lipid carrier undecaprenyl phosphate, yielding undecaprenyl-pyrophosphoryl-MurNAc-pentapeptide, known as lipid I. This Saccharopolyspora erythraea (strain ATCC 11635 / DSM 40517 / JCM 4748 / NBRC 13426 / NCIMB 8594 / NRRL 2338) protein is Phospho-N-acetylmuramoyl-pentapeptide-transferase.